Consider the following 273-residue polypeptide: MILKGCLLYPLCSPRNKQRCARLWKIAYGGLLKIVTGSLLTFYVVLCLDGGMVLMRKQVPSRFMYPKEWQHLTMFILLTLNGCVDFMSKNVLPQRCVGLEKGTLVLIIYELLLLMVSHVKDSEGVELHVYSLLILVVFLLLLVLTAELWAPNMCHLQLMETFLILMMGSWLMQAGFILYRPVSGYPWQDDDISDIMFVTTFFCWHVMINASFLLGIYGFSSFWYHCFRPSLKLTGPKEAPYYASTPGPLYKLLQEVEQSEKEDQALLLPKSSP.

Helical transmembrane passes span 34–54, 72–92, 96–116, 129–149, 158–178, and 195–215; these read IVTG…GMVL, LTMF…KNVL, CVGL…LLMV, VYSL…AELW, LMET…GFIL, and IMFV…FLLG.

Belongs to the TMEM45 family.

The protein localises to the membrane. This is Transmembrane epididymal protein 1 (TEDDM1) from Homo sapiens (Human).